Consider the following 2036-residue polypeptide: Transmembrane channel-like protein (2036 aa).

Disordered stretches follow at residues 1–178 (MQND…IDDE) and 194–243 (SVRG…ESTQ). Residues 1-353 (MQNDEEPAAA…GVASYFTFLR (353 aa)) lie on the Cytoplasmic side of the membrane. Residues 58-73 (VGSSSSNGNTSNVATG) show a composition bias toward low complexity. A compositionally biased stretch (polar residues) spans 74–90 (ANSENNSGVTSPHQLSV). Positions 125 to 134 (ASQEDHRSYE) are enriched in basic and acidic residues. The span at 166–178 (FDEDGGGGDIDDE) shows a compositional bias: acidic residues. Positions 198-208 (YRGKRGSRSSR) are enriched in basic residues. Residues 216–225 (HVLDSVERRR) are compositionally biased toward basic and acidic residues. Polar residues predominate over residues 227-243 (SVYTTSSEEGTNQESTQ). Residues 354 to 374 (WLMWVNIMIAIPLVAFVIGPE) traverse the membrane as a helical segment. Residues 375–395 (YFATKHGETDPRKRMSDPEAR) lie on the Extracellular side of the membrane. The chain crosses the membrane as a helical span at residues 396 to 418 (VAGNLFTFWEFEGYLKYSPMFYG). At 419–432 (YYSSTSGISTSGYK) the chain is on the cytoplasmic side. Residues 433–453 (LPLAYFLTAVLVYIYSFVATL) traverse the membrane as a helical segment. The Extracellular segment spans residues 454 to 526 (RKMAENSRNS…NRNWRVILQR (73 aa)). A helical transmembrane segment spans residues 527–547 (ILVNILVMGLLGLSGATVVLL). The Cytoplasmic portion of the chain corresponds to 548–567 (VNHSEDLAKHDNWLSRNAVN). The helical transmembrane segment at 568 to 588 (VTMTLLSFFLPMIFEALGLFE) threads the bilayer. At 589–599 (NWHPRQQLRLQ) the chain is on the extracellular side. The helical transmembrane segment at 600 to 620 (LARIMILNMLNLYSLMFSFIY) threads the bilayer. Residues 621 to 1308 (KINSKEKPLQ…ILTLINNQGQ (688 aa)) are Cytoplasmic-facing. Disordered regions lie at residues 789–839 (TTAT…TEAT), 860–967 (KPLG…TDQA), 996–1027 (FFTS…NATP), 1066–1143 (LRGR…EGSE), and 1186–1205 (GSTT…KQLT). Positions 870-885 (IPNSTTNSATLSTIPA) are enriched in polar residues. Low complexity predominate over residues 886-906 (TLNTTNLPLNSTTKLTTTTST). A compositionally biased stretch (polar residues) spans 933-952 (TSDAPDNNSYSDITDYSSEP). The span at 953–967 (SEIEDFDEQESTDQA) shows a compositional bias: acidic residues. Low complexity-rich tracts occupy residues 1069–1083 (RITT…STTT), 1091–1100 (RTTTTELTST), and 1107–1130 (TTES…SSST). The chain crosses the membrane as a helical span at residues 1309–1329 (VWMGIFFSPGLVLINLVKLMI). Over 1330 to 1358 (MMYFRSWIVLTCNVPHEVVFKASKSNNFY) the chain is Extracellular. Residues 1359-1379 (LSLLLTMLFLCVLPVGYAIVW) form a helical membrane-spanning segment. Topologically, residues 1380–1423 (LRPSWHCGPFSEYNRIAEFITNTTRNALPKQLHEPLDYLTSSST) are cytoplasmic. A helical membrane pass occupies residues 1424–1444 (VIPLLLLLILIIYYLVSLTGA). The Extracellular portion of the chain corresponds to 1445–2036 (LREANQDLRT…RIDIENEHEK (592 aa)). 3 disordered regions span residues 1527-1572 (LRKG…SRLQ), 1592-1841 (ERAR…SRQG), and 1859-1990 (KKDD…IPTI). Composition is skewed to basic and acidic residues over residues 1538 to 1566 (SFVR…DKRF), 1614 to 1640 (KETH…DKKD), 1658 to 1668 (SPKDNEHDPDT), 1727 to 1743 (HIVD…EDKP), and 1777 to 1793 (PEPE…ERSS). Residues 1806 to 1838 (NEPSGTEEQDRSLPSPTPSQGQGHHQRQLSVLS) show a composition bias toward polar residues. The span at 1890–1899 (VLSSVSSSTA) shows a compositional bias: low complexity. The span at 1903–1914 (PPTPEPESPTPS) shows a compositional bias: pro residues. Positions 1976–1990 (QDSQSSIWSDNIPTI) are enriched in polar residues.

The protein belongs to the TMC family. Expressed in multi-dendritic neurons of the labellum (md-L), which extend elaborate dendritic arbors innervating the bases of taste hairs (at protein level). In larvae, expressed in class I and class II dendritic arborization (da) neurons and bipolar dendrite (bd) neurons (at protein level). In adults, expressed in various sensory neurons including those in the mouth parts, olfactory neurons in the antenna, wing bristle neurons, haltere neurons, arista neurons, and many other sensory neurons, including a subset of chordotonal (Cho) neurons. Expressed in md-L axon terminals, including those that project into the subesophageal zone (SEZ). Also expressed in a small number of local neurons in the adult ventral nerve cord (VNC), and projections extending from a few neurons in the legs or wing hinges. In the adult mouth, expressed in a few multi-dendritic neurons of the ventral cibarial sensory organ (VCSO); the multiple elaborate dendritic branches form a brush-like structure that faces the luminal side of the food-passing tunnel. Also expressed in the oviduct and uterus of adult females.

Its subcellular location is the cell membrane. The protein localises to the cell projection. It localises to the dendrite. Probable ion channel. Component of mechanosensitive neurons that participates in proprioception, sensing food texture, and directing egg-laying site selection (oviposition). Component of multi-dendritic neurons of the labellum (md-L) where it is required for sensing the hardness and viscosity of their food, enabling them to behaviorally discriminate their preferred softness and smoothness from harder and stickier food options. Required as part of oviposition site selection process to relay mechanosensory and chemosensory information on the hardness and sweetness of potential egg-laying substrates, thus ensuring females select the most optimal site for their eggs survival. Females determine the softest substrate for their eggs first by making a coarse evaluation of substrate hardness using mechanosensitive channels nan and Piezo in the leg tarsal bristles, followed by a much finer assessment using nan, iav and Tmc mechanosensitive channels on the labellum. This protein is required to sense subtle differences in substrate stiffness (between 0.25% and 0.3% agarose), likely acting in the md-L neurons. Also required in neurons on the labellum, including the md-Ls, and possibly in the brain, to inhibit discrimination of egg-laying substrates of different hardness if the substrate contains sucrose. During oviposition evaluation, activation of sweet neurons by sucrose enhances the activity of the Tmc neurons resulting in females losing their softness preference in favor of egg-laying sites that contain sucrose. Acts in the larvae peripheral sensory neurons, to contribute to proprioception and sensory feedback for normal forward crawling behavior. Required for the normal activity of the proprioceptive sensory dendrites, ddaE which show preferential responses to forward locomotion, and ddaD which show preferential responses to backward locomotion. The protein is Transmembrane channel-like protein of Drosophila melanogaster (Fruit fly).